Reading from the N-terminus, the 451-residue chain is Tubulin alpha-1B chain (451 aa).

Residues 1–4 (MREC) carry the MREC motif motif. GTP is bound by residues Gly10, Gln11, Ala12, and Gln15. Lys40 carries the N6,N6,N6-trimethyllysine; alternate modification. Lys40 is subject to N6-acetyllysine; alternate. Residue Ser48 is modified to Phosphoserine. 12 residues coordinate GTP: Glu71, Ala99, Ser140, Gly143, Gly144, Thr145, Gly146, Thr179, Glu183, Asn206, Tyr224, and Asn228. Glu71 lines the Mg(2+) pocket. Ser232 bears the Phosphoserine mark. Residue Leu252 participates in GTP binding. The active site involves Glu254. Tyr282 carries the 3'-nitrotyrosine modification. Lys326 participates in a covalent cross-link: Glycyl lysine isopeptide (Lys-Gly) (interchain with G-Cter in ubiquitin). Residue Arg339 is modified to Omega-N-methylarginine. Lys370 participates in a covalent cross-link: Glycyl lysine isopeptide (Lys-Gly) (interchain with G-Cter in ubiquitin). The segment at 432-451 (YEEVGVDSVEGEGEEEGEEY) is disordered. Ser439 is subject to Phosphoserine. Glu443 and Glu445 each carry 5-glutamyl polyglutamate. A 3'-nitrotyrosine modification is found at Tyr451.

Belongs to the tubulin family. Heterodimer of alpha- and beta-tubulin. A typical microtubule is a hollow water-filled tube with an outer diameter of 25 nm and an inner diameter of 15 nM. Alpha-beta heterodimers associate head-to-tail to form protofilaments running lengthwise along the microtubule wall with the beta-tubulin subunit facing the microtubule plus end conferring a structural polarity. Microtubules usually have 13 protofilaments but different protofilament numbers can be found in some organisms and specialized cells. Interacts with gamma-tubulin; the interaction allows microtubules to nucleate from the gamma-tubulin ring complex (gTuRC). Nascent microtubule interacts (via alpha-tubulin MREC motif) with TTC5/STRAP; this interaction may result in tubulin mRNA-targeted degradation. Component of sperm flagellar doublet microtubules. Requires Mg(2+) as cofactor. Some glutamate residues at the C-terminus are polyglutamylated, resulting in polyglutamate chains on the gamma-carboxyl group. Polyglutamylation plays a key role in microtubule severing by spastin (SPAST). SPAST preferentially recognizes and acts on microtubules decorated with short polyglutamate tails: severing activity by SPAST increases as the number of glutamates per tubulin rises from one to eight, but decreases beyond this glutamylation threshold. Glutamylation is also involved in cilia motility. In terms of processing, some glutamate residues at the C-terminus are monoglycylated but not polyglycylated due to the absence of functional TTLL10 in human. Monoglycylation is mainly limited to tubulin incorporated into cilia and flagella axonemes, which is required for their stability and maintenance. Flagella glycylation controls sperm motility. Both polyglutamylation and monoglycylation can coexist on the same protein on adjacent residues, and lowering glycylation levels increases polyglutamylation, and reciprocally. Post-translationally, acetylation of alpha chains at Lys-40 is located inside the microtubule lumen. This modification has been correlated with increased microtubule stability, intracellular transport and ciliary assembly. Methylation of alpha chains at Lys-40 is found in mitotic microtubules and is required for normal mitosis and cytokinesis contributing to genomic stability. In terms of processing, nitration of Tyr-451 is irreversible and interferes with normal dynein intracellular distribution. Post-translationally, undergoes a tyrosination/detyrosination cycle, the cyclic removal and re-addition of a C-terminal tyrosine residue by the enzymes tubulin tyrosine carboxypeptidase (MATCAP1/KIAA0895L, VASH1 or VASH2) and tubulin tyrosine ligase (TTL), respectively. Tyrosination promotes microtubule interaction with CAP-Gly domain-containing proteins such as CLIP1, CLIP2 and DCTN1. Tyrosination regulates the initiation of dynein-dynactin motility via interaction with DCTN1, which brings the dynein-dynactin complex into contact with microtubules. In neurons, tyrosinated tubulins mediate the initiation of retrograde vesicle transport. In terms of processing, detyrosination is involved in metaphase plate congression by guiding chromosomes during mitosis: detyrosination promotes interaction with CENPE, promoting pole-proximal transport of chromosomes toward the equator. Detyrosination increases microtubules-dependent mechanotransduction in dystrophic cardiac and skeletal muscle. In cardiomyocytes, detyrosinated microtubules are required to resist to contractile compression during contraction: detyrosination promotes association with desmin (DES) at force-generating sarcomeres, leading to buckled microtubules and mechanical resistance to contraction.

Its subcellular location is the cytoplasm. It is found in the cytoskeleton. It carries out the reaction GTP + H2O = GDP + phosphate + H(+). In terms of biological role, tubulin is the major constituent of microtubules, protein filaments consisting of alpha- and beta-tubulin heterodimers. Microtubules grow by the addition of GTP-tubulin dimers to the microtubule end, where a stabilizing cap forms. Below the cap, tubulin dimers are in GDP-bound state, owing to GTPase activity of alpha-tubulin. This Homo sapiens (Human) protein is Tubulin alpha-1B chain (TUBA1B).